A 262-amino-acid chain; its full sequence is Ribosomal RNA small subunit methyltransferase A (262 aa).

The S-adenosyl-L-methionine site is built by Asn-20, Leu-22, Gly-47, Glu-68, Asp-90, and Asn-110.

The protein belongs to the class I-like SAM-binding methyltransferase superfamily. rRNA adenine N(6)-methyltransferase family. RsmA subfamily.

It is found in the cytoplasm. The enzyme catalyses adenosine(1518)/adenosine(1519) in 16S rRNA + 4 S-adenosyl-L-methionine = N(6)-dimethyladenosine(1518)/N(6)-dimethyladenosine(1519) in 16S rRNA + 4 S-adenosyl-L-homocysteine + 4 H(+). Functionally, specifically dimethylates two adjacent adenosines (A1518 and A1519) in the loop of a conserved hairpin near the 3'-end of 16S rRNA in the 30S particle. May play a critical role in biogenesis of 30S subunits. In Chlorobium phaeobacteroides (strain BS1), this protein is Ribosomal RNA small subunit methyltransferase A.